The following is a 45-amino-acid chain: Large ribosomal subunit protein bL34 (45 aa).

The disordered stretch occupies residues 1–27 (MTKRTLGGTSRKRKRVSGFRVRMRTHT). Over residues 10-27 (SRKRKRVSGFRVRMRTHT) the composition is skewed to basic residues.

It belongs to the bacterial ribosomal protein bL34 family.

This chain is Large ribosomal subunit protein bL34, found in Prochlorococcus marinus (strain MIT 9211).